A 132-amino-acid chain; its full sequence is uncharacterized protein (132 aa).

This is an uncharacterized protein from Acanthamoeba polyphaga (Amoeba).